A 193-amino-acid polypeptide reads, in one-letter code: 3-isopropylmalate dehydratase small subunit (193 aa).

Belongs to the LeuD family. LeuD type 1 subfamily. As to quaternary structure, heterodimer of LeuC and LeuD.

It carries out the reaction (2R,3S)-3-isopropylmalate = (2S)-2-isopropylmalate. It participates in amino-acid biosynthesis; L-leucine biosynthesis; L-leucine from 3-methyl-2-oxobutanoate: step 2/4. Its function is as follows. Catalyzes the isomerization between 2-isopropylmalate and 3-isopropylmalate, via the formation of 2-isopropylmaleate. This Listeria monocytogenes serovar 1/2a (strain ATCC BAA-679 / EGD-e) protein is 3-isopropylmalate dehydratase small subunit.